The following is a 422-amino-acid chain: Dihydroorotase (422 aa).

Residues His-59 and His-61 each coordinate Zn(2+). Residues 61–63 (HFR) and Asn-93 each bind substrate. 3 residues coordinate Zn(2+): Asp-150, His-177, and His-230. Residue Asn-276 participates in substrate binding. Residue Asp-303 coordinates Zn(2+). Asp-303 is a catalytic residue. His-307 serves as a coordination point for substrate.

This sequence belongs to the metallo-dependent hydrolases superfamily. DHOase family. Class I DHOase subfamily. The cofactor is Zn(2+).

The enzyme catalyses (S)-dihydroorotate + H2O = N-carbamoyl-L-aspartate + H(+). It participates in pyrimidine metabolism; UMP biosynthesis via de novo pathway; (S)-dihydroorotate from bicarbonate: step 3/3. In terms of biological role, catalyzes the reversible cyclization of carbamoyl aspartate to dihydroorotate. The chain is Dihydroorotase from Streptococcus thermophilus (strain CNRZ 1066).